Reading from the N-terminus, the 227-residue chain is Lipoprotein-releasing system ATP-binding protein LolD (227 aa).

The 221-residue stretch at 7 to 227 (LRLERIGRAY…TLKDGRVVDL (221 aa)) folds into the ABC transporter domain. Residue 43-50 (APSGAGKS) coordinates ATP.

It belongs to the ABC transporter superfamily. Lipoprotein translocase (TC 3.A.1.125) family. As to quaternary structure, the complex is composed of two ATP-binding proteins (LolD) and two transmembrane proteins (LolC and LolE).

The protein resides in the cell inner membrane. Part of the ABC transporter complex LolCDE involved in the translocation of mature outer membrane-directed lipoproteins, from the inner membrane to the periplasmic chaperone, LolA. Responsible for the formation of the LolA-lipoprotein complex in an ATP-dependent manner. The protein is Lipoprotein-releasing system ATP-binding protein LolD of Brucella abortus biovar 1 (strain 9-941).